The sequence spans 1358 residues: DNA-directed RNA polymerase subunit beta (1358 aa).

The protein belongs to the RNA polymerase beta chain family. As to quaternary structure, the RNAP catalytic core consists of 2 alpha, 1 beta, 1 beta' and 1 omega subunit. When a sigma factor is associated with the core the holoenzyme is formed, which can initiate transcription.

The catalysed reaction is RNA(n) + a ribonucleoside 5'-triphosphate = RNA(n+1) + diphosphate. Functionally, DNA-dependent RNA polymerase catalyzes the transcription of DNA into RNA using the four ribonucleoside triphosphates as substrates. The sequence is that of DNA-directed RNA polymerase subunit beta from Francisella tularensis subsp. mediasiatica (strain FSC147).